The chain runs to 76 residues: MFTMKKSLLFLFFLGTISLSLCEQERGADEDDGGEEVKRGIFSLFKAGAKFFGKNLLKEAGKAGAEHLACKAANQC.

The first 22 residues, 1-22 (MFTMKKSLLFLFFLGTISLSLC), serve as a signal peptide directing secretion. Residues 23–37 (EQERGADEDDGGEEV) constitute a propeptide that is removed on maturation. Cysteines 70 and 76 form a disulfide.

Belongs to the frog skin active peptide (FSAP) family. Esculentin subfamily. In terms of tissue distribution, expressed by the skin glands.

The protein resides in the secreted. Functionally, antimicrobial peptide. Active against some Gram-negative and a variety of Gram-positive bacterial strains. Not active against fungi. Shows very weak hemolytic activity against human erythrocytes. The chain is Esculentin-2SN1 from Sylvirana spinulosa (Fine-spined frog).